The chain runs to 682 residues: Penicillin-binding protein activator LpoA (682 aa).

A signal peptide spans M1 to G26. C27 carries the N-palmitoyl cysteine lipid modification. A lipid anchor (S-diacylglycerol cysteine) is attached at C27. Disordered regions lie at residues A240–T262 and A314–T341. Low complexity predominate over residues G248–T262.

The protein belongs to the LpoA family. In terms of assembly, interacts with PBP1a.

The protein resides in the cell outer membrane. Functionally, regulator of peptidoglycan synthesis that is essential for the function of penicillin-binding protein 1A (PBP1a). The polypeptide is Penicillin-binding protein activator LpoA (Dickeya chrysanthemi (strain Ech1591) (Dickeya zeae (strain Ech1591))).